The sequence spans 496 residues: Lysine--tRNA ligase (496 aa).

Residues Glu-405 and Glu-412 each contribute to the Mg(2+) site.

This sequence belongs to the class-II aminoacyl-tRNA synthetase family. As to quaternary structure, homodimer. Mg(2+) serves as cofactor.

Its subcellular location is the cytoplasm. It carries out the reaction tRNA(Lys) + L-lysine + ATP = L-lysyl-tRNA(Lys) + AMP + diphosphate. This chain is Lysine--tRNA ligase, found in Vesicomyosocius okutanii subsp. Calyptogena okutanii (strain HA).